We begin with the raw amino-acid sequence, 443 residues long: Nuclear pore complex-interacting protein family member B15 (443 aa).

An N-terminal signal peptide occupies residues 1–18 (MRLRFWLLIWLLLGFISH). The N-linked (GlcNAc...) asparagine glycan is linked to asparagine 111. Disordered stretches follow at residues 242 to 262 (RMGR…NSLS) and 330 to 413 (SPLP…TRHC). The span at 252-262 (QQHSITDNSLS) shows a compositional bias: polar residues. Over residues 351-393 (EAEKPPKPKRWRVDEVEQSPKPKRRRADEVEQSPKPKRQREAE) the composition is skewed to basic and acidic residues. A compositionally biased stretch (basic residues) spans 399 to 412 (KPKRRRLSKLRTRH).

Belongs to the NPIP family.

The protein localises to the secreted. The polypeptide is Nuclear pore complex-interacting protein family member B15 (NPIPB15) (Homo sapiens (Human)).